Reading from the N-terminus, the 2298-residue chain is Protein Ycf2 (2298 aa).

ATP is bound at residue 1652–1659 (GSIGTGRS).

Belongs to the Ycf2 family.

The protein resides in the plastid. It localises to the chloroplast stroma. In terms of biological role, probable ATPase of unknown function. Its presence in a non-photosynthetic plant (Epifagus virginiana) and experiments in tobacco indicate that it has an essential function which is probably not related to photosynthesis. This Aethionema cordifolium (Lebanon stonecress) protein is Protein Ycf2.